The primary structure comprises 408 residues: Serine/threonine transporter SstT (408 aa).

Transmembrane regions (helical) follow at residues 11–31 (LANG…VILA), 43–63 (FLGS…VFIL), 81–101 (PIVV…VVLS), 141–161 (ALMT…GLAL), 192–212 (IGIF…AIAG), 216–236 (LLAV…PLIV), 298–318 (MGGA…TLGI), 330–350 (VVAA…LLLI), and 357–377 (FGIS…IGVI).

This sequence belongs to the dicarboxylate/amino acid:cation symporter (DAACS) (TC 2.A.23) family.

Its subcellular location is the cell inner membrane. The enzyme catalyses L-serine(in) + Na(+)(in) = L-serine(out) + Na(+)(out). It carries out the reaction L-threonine(in) + Na(+)(in) = L-threonine(out) + Na(+)(out). Involved in the import of serine and threonine into the cell, with the concomitant import of sodium (symport system). This is Serine/threonine transporter SstT from Shewanella sp. (strain W3-18-1).